A 257-amino-acid polypeptide reads, in one-letter code: Type III pantothenate kinase (257 aa).

ATP is bound at residue 5-12 (DIGNTNIK). 107 to 110 (GSDR) is a substrate binding site. Residue aspartate 109 is the Proton acceptor of the active site. Threonine 133 provides a ligand contact to ATP.

It belongs to the type III pantothenate kinase family. Homodimer. The cofactor is NH4(+). Requires K(+) as cofactor.

The protein resides in the cytoplasm. It catalyses the reaction (R)-pantothenate + ATP = (R)-4'-phosphopantothenate + ADP + H(+). It functions in the pathway cofactor biosynthesis; coenzyme A biosynthesis; CoA from (R)-pantothenate: step 1/5. Catalyzes the phosphorylation of pantothenate (Pan), the first step in CoA biosynthesis. This chain is Type III pantothenate kinase, found in Ehrlichia ruminantium (strain Welgevonden).